The primary structure comprises 119 residues: Class I hydrophobin 2 (119 aa).

A signal peptide spans 1 to 22 (MFARISTIITTLFFAMLAAATA). 4 cysteine pairs are disulfide-bonded: Cys36/Cys97, Cys45/Cys91, Cys46/Cys79, and Cys98/Cys112.

It belongs to the fungal hydrophobin family. In terms of assembly, self-assembles to form functional amyloid fibrils called rodlets. Self-assembly into fibrillar rodlets occurs spontaneously at hydrophobic:hydrophilic interfaces and the rodlets further associate laterally to form amphipathic monolayers.

It is found in the secreted. The protein resides in the cell wall. Aerial growth, conidiation, and dispersal of filamentous fungi in the environment rely upon a capability of their secreting small amphipathic proteins called hydrophobins (HPBs) with low sequence identity. Class I can self-assemble into an outermost layer of rodlet bundles on aerial cell surfaces, conferring cellular hydrophobicity that supports fungal growth, development and dispersal; whereas Class II form highly ordered films at water-air interfaces through intermolecular interactions but contribute nothing to the rodlet structure. Abh2 is a class I hydrophobin involved in the emergence of aerial hyphae and strands. The sequence is that of Class I hydrophobin 2 from Agaricus bisporus (White button mushroom).